A 765-amino-acid polypeptide reads, in one-letter code: Ubiquitin-like modifier-activating enzyme atg7 (765 aa).

A GXGXXG motif motif is present at residues 436–441 (GAGTLG). C616 serves as the catalytic Glycyl thioester intermediate. Disordered regions lie at residues 646–670 (AAPA…PPNH) and 744–765 (AAND…PELL). The interval 721 to 760 (ALTEKDYITELSGLAEVQRKAEAAANDVEWDSDEEGMEDE) is homodimerization. Positions 748 to 765 (VEWDSDEEGMEDEEPELL) are enriched in acidic residues.

Belongs to the ATG7 family. Homodimer. Interacts with ATG8 through a thioester bond between Cys-616 and the C-terminal Gly of ATG8 and with ATG12 through a thioester bond between Cys-616 and the C-terminal Gly of ATG12. Also interacts with ATG3.

The protein resides in the cytoplasm. It is found in the preautophagosomal structure. In terms of biological role, E1-like activating enzyme involved in the 2 ubiquitin-like systems required for cytoplasm to vacuole transport (Cvt) and autophagy. Activates ATG12 for its conjugation with ATG5 and ATG8 for its conjugation with phosphatidylethanolamine. Both systems are needed for the ATG8 association to Cvt vesicles and autophagosomes membranes. Autophagy is essential for maintenance of amino acid levels and protein synthesis under nitrogen starvation. Required for selective autophagic degradation of the nucleus (nucleophagy) as well as for mitophagy which contributes to regulate mitochondrial quantity and quality by eliminating the mitochondria to a basal level to fulfill cellular energy requirements and preventing excess ROS production. Required for normal mycelial growth and conidiogenesis, and regulates sclerotial formation. Plays an essential role in pathogenesis. The chain is Ubiquitin-like modifier-activating enzyme atg7 from Botryotinia fuckeliana (strain BcDW1) (Noble rot fungus).